Consider the following 540-residue polypeptide: Probable protein kinase UbiB (540 aa).

The helical transmembrane segment at 24-44 threads the bilayer; the sequence is LLFEQPLLPWWLASLRLLMPW. The 369-residue stretch at 126–494 folds into the Protein kinase domain; the sequence is RFDVEPLASA…RRRQGDRWAL (369 aa). ATP-binding positions include 132–140 and lysine 154; that span reads LASASVAQV. Aspartate 289 functions as the Proton acceptor in the catalytic mechanism. A run of 2 helical transmembrane segments spans residues 496–516 and 518–538; these read LLGA…AEAA and LAAP…YLIV.

It belongs to the ABC1 family. UbiB subfamily.

It is found in the cell inner membrane. It participates in cofactor biosynthesis; ubiquinone biosynthesis [regulation]. Its function is as follows. Is probably a protein kinase regulator of UbiI activity which is involved in aerobic coenzyme Q (ubiquinone) biosynthesis. In Pseudomonas putida (strain GB-1), this protein is Probable protein kinase UbiB.